Here is a 211-residue protein sequence, read N- to C-terminus: ATP phosphoribosyltransferase (211 aa).

Belongs to the ATP phosphoribosyltransferase family. Short subfamily. Heteromultimer composed of HisG and HisZ subunits.

Its subcellular location is the cytoplasm. It catalyses the reaction 1-(5-phospho-beta-D-ribosyl)-ATP + diphosphate = 5-phospho-alpha-D-ribose 1-diphosphate + ATP. It participates in amino-acid biosynthesis; L-histidine biosynthesis; L-histidine from 5-phospho-alpha-D-ribose 1-diphosphate: step 1/9. Its function is as follows. Catalyzes the condensation of ATP and 5-phosphoribose 1-diphosphate to form N'-(5'-phosphoribosyl)-ATP (PR-ATP). Has a crucial role in the pathway because the rate of histidine biosynthesis seems to be controlled primarily by regulation of HisG enzymatic activity. The polypeptide is ATP phosphoribosyltransferase (hisG) (Pseudomonas aeruginosa (strain ATCC 15692 / DSM 22644 / CIP 104116 / JCM 14847 / LMG 12228 / 1C / PRS 101 / PAO1)).